The chain runs to 140 residues: uncharacterized protein (140 aa).

The N-terminal stretch at 1–22 is a signal peptide; it reads MRLRWQTIVLLLLILGGASASA.

This is an uncharacterized protein from Archaeoglobus fulgidus (strain ATCC 49558 / DSM 4304 / JCM 9628 / NBRC 100126 / VC-16).